A 293-amino-acid chain; its full sequence is Acetylglutamate kinase (293 aa).

Residues 68–69 (GG), Arg-90, and Asn-189 contribute to the substrate site.

The protein belongs to the acetylglutamate kinase family. ArgB subfamily.

The protein localises to the cytoplasm. The enzyme catalyses N-acetyl-L-glutamate + ATP = N-acetyl-L-glutamyl 5-phosphate + ADP. The protein operates within amino-acid biosynthesis; L-arginine biosynthesis; N(2)-acetyl-L-ornithine from L-glutamate: step 2/4. Catalyzes the ATP-dependent phosphorylation of N-acetyl-L-glutamate. The protein is Acetylglutamate kinase of Mycobacterium marinum (strain ATCC BAA-535 / M).